Reading from the N-terminus, the 116-residue chain is NADH-ubiquinone oxidoreductase chain 3 (116 aa).

The next 3 membrane-spanning stretches (helical) occupy residues Leu-3 to Phe-23, Phe-56 to Leu-76, and Pro-85 to Tyr-105.

It belongs to the complex I subunit 3 family.

It is found in the mitochondrion membrane. It carries out the reaction a ubiquinone + NADH + 5 H(+)(in) = a ubiquinol + NAD(+) + 4 H(+)(out). Core subunit of the mitochondrial membrane respiratory chain NADH dehydrogenase (Complex I) that is believed to belong to the minimal assembly required for catalysis. Complex I functions in the transfer of electrons from NADH to the respiratory chain. The immediate electron acceptor for the enzyme is believed to be ubiquinone. The polypeptide is NADH-ubiquinone oxidoreductase chain 3 (MT-ND3) (Salmo trutta (Brown trout)).